Here is a 58-residue protein sequence, read N- to C-terminus: Large ribosomal subunit protein uL30 (58 aa).

Belongs to the universal ribosomal protein uL30 family. As to quaternary structure, part of the 50S ribosomal subunit.

The polypeptide is Large ribosomal subunit protein uL30 (Buchnera aphidicola subsp. Baizongia pistaciae (strain Bp)).